Reading from the N-terminus, the 69-residue chain is Pantinin-1 (69 aa).

Residues 1-23 (MKTQFVILMITVILMQMLVQTEG) form the signal peptide. The residue at position 37 (Val-37) is a Valine amide. The propeptide occupies 41 to 69 (GLNDRDQLDDLFDSDLSDADIKLLKEMFK).

This sequence belongs to the non-disulfide-bridged peptide (NDBP) superfamily. Short antimicrobial peptide (group 4) family. As to expression, expressed by the venom gland.

Its subcellular location is the secreted. It is found in the target cell membrane. Functionally, amphipathic peptide that possesses relatively strong activities against Gram-positive bacteria and a fungus, but has very weak antimicrobial activities against Gram-negative bacteria. Also exhibits very low hemolytic activities against human erythrocytes (64 uM induce 21% of hemolysis). Minimal inhibitory concentration (MIC) are the following: 8 uM against S.aureus, 32 uM against B.magaterium, 32 uM against M.luteus, 28 uM against vancomycin-resistant Enterococci, 14 uM against methicillin-resistant S.aureus, 62 uM against E.coli, &gt;87 uM against P.putida, &gt;87 uM against K.oxytoca, 76 uM against E.cloacae, 72 uM against S.enterica and 16 uM against the fungus C.tropicalis. The sequence is that of Pantinin-1 from Pandinus imperator (Emperor scorpion).